The sequence spans 428 residues: Trigger factor (428 aa).

In terms of domain architecture, PPIase FKBP-type spans 163 to 248 (GNIAVIDFKG…VKEIKVKELP (86 aa)).

The protein belongs to the FKBP-type PPIase family. Tig subfamily.

It localises to the cytoplasm. It catalyses the reaction [protein]-peptidylproline (omega=180) = [protein]-peptidylproline (omega=0). Functionally, involved in protein export. Acts as a chaperone by maintaining the newly synthesized protein in an open conformation. Functions as a peptidyl-prolyl cis-trans isomerase. The protein is Trigger factor of Clostridium perfringens (strain ATCC 13124 / DSM 756 / JCM 1290 / NCIMB 6125 / NCTC 8237 / Type A).